The chain runs to 558 residues: Dihydroxy-acid dehydratase (558 aa).

Cys51 contributes to the [2Fe-2S] cluster binding site. Asp83 lines the Mg(2+) pocket. Cys124 is a binding site for [2Fe-2S] cluster. Mg(2+)-binding residues include Asp125 and Lys126. Residue Lys126 is modified to N6-carboxylysine. [2Fe-2S] cluster is bound at residue Cys196. Mg(2+) is bound at residue Glu447. Ser473 serves as the catalytic Proton acceptor.

Belongs to the IlvD/Edd family. Homodimer. The cofactor is [2Fe-2S] cluster. Mg(2+) serves as cofactor.

The catalysed reaction is (2R)-2,3-dihydroxy-3-methylbutanoate = 3-methyl-2-oxobutanoate + H2O. It carries out the reaction (2R,3R)-2,3-dihydroxy-3-methylpentanoate = (S)-3-methyl-2-oxopentanoate + H2O. It functions in the pathway amino-acid biosynthesis; L-isoleucine biosynthesis; L-isoleucine from 2-oxobutanoate: step 3/4. The protein operates within amino-acid biosynthesis; L-valine biosynthesis; L-valine from pyruvate: step 3/4. Functions in the biosynthesis of branched-chain amino acids. Catalyzes the dehydration of (2R,3R)-2,3-dihydroxy-3-methylpentanoate (2,3-dihydroxy-3-methylvalerate) into 2-oxo-3-methylpentanoate (2-oxo-3-methylvalerate) and of (2R)-2,3-dihydroxy-3-methylbutanoate (2,3-dihydroxyisovalerate) into 2-oxo-3-methylbutanoate (2-oxoisovalerate), the penultimate precursor to L-isoleucine and L-valine, respectively. In Flavobacterium psychrophilum (strain ATCC 49511 / DSM 21280 / CIP 103535 / JIP02/86), this protein is Dihydroxy-acid dehydratase.